The chain runs to 330 residues: DNA-directed RNA polymerase subunit alpha (330 aa).

An alpha N-terminal domain (alpha-NTD) region spans residues 1–232 (MAILAFQKPD…YHFMLFSDEK (232 aa)). The segment at 248-330 (EEVLHMRQLL…DISKYKLDKE (83 aa)) is alpha C-terminal domain (alpha-CTD).

It belongs to the RNA polymerase alpha chain family. In terms of assembly, homodimer. The RNAP catalytic core consists of 2 alpha, 1 beta, 1 beta' and 1 omega subunit. When a sigma factor is associated with the core the holoenzyme is formed, which can initiate transcription.

It catalyses the reaction RNA(n) + a ribonucleoside 5'-triphosphate = RNA(n+1) + diphosphate. In terms of biological role, DNA-dependent RNA polymerase catalyzes the transcription of DNA into RNA using the four ribonucleoside triphosphates as substrates. The chain is DNA-directed RNA polymerase subunit alpha from Bacteroides thetaiotaomicron (strain ATCC 29148 / DSM 2079 / JCM 5827 / CCUG 10774 / NCTC 10582 / VPI-5482 / E50).